The primary structure comprises 864 residues: DNA mismatch repair protein MutS (864 aa).

ATP is bound at residue 613-620 (GPNMGGKS).

It belongs to the DNA mismatch repair MutS family.

This protein is involved in the repair of mismatches in DNA. It is possible that it carries out the mismatch recognition step. This protein has a weak ATPase activity. This Actinobacillus pleuropneumoniae serotype 3 (strain JL03) protein is DNA mismatch repair protein MutS.